The chain runs to 217 residues: MTLFSSLLSRVSKDGKESIRGNYKPKKHPRGSSRHTMRKSLKKNLAGGTVLKESVKCPDGEDENEWIAVNTIEIFNTMNMCYSFIQGFCTEASCPQMTGAKATYLWTDGKGKPQELSAPQYIDNLVNWISEQIDNPEIFPVDDSDFPKNYRPAVIKIISRVLRVYAHIYHAHWDHIQKLDCYQHTNTSLKHLQYFAEHFSLIGEKDLAVMKHVFDTL.

The disordered stretch occupies residues 15–38 (GKESIRGNYKPKKHPRGSSRHTMR). The span at 23–38 (YKPKKHPRGSSRHTMR) shows a compositional bias: basic residues. The Zn(2+) site is built by Cys89, Cys94, His167, and His172.

The protein belongs to the MOB1/phocein family.

This Dictyostelium discoideum (Social amoeba) protein is MOB kinase activator-like 2 (mob2).